We begin with the raw amino-acid sequence, 109 residues long: Large ribosomal subunit protein bL19 (109 aa).

Belongs to the bacterial ribosomal protein bL19 family.

Functionally, this protein is located at the 30S-50S ribosomal subunit interface and may play a role in the structure and function of the aminoacyl-tRNA binding site. The polypeptide is Large ribosomal subunit protein bL19 (Rubrobacter xylanophilus (strain DSM 9941 / JCM 11954 / NBRC 16129 / PRD-1)).